We begin with the raw amino-acid sequence, 230 residues long: UPF0173 metal-dependent hydrolase MK1542 (230 aa).

This sequence belongs to the UPF0173 family.

This is UPF0173 metal-dependent hydrolase MK1542 from Methanopyrus kandleri (strain AV19 / DSM 6324 / JCM 9639 / NBRC 100938).